Here is a 210-residue protein sequence, read N- to C-terminus: Urease accessory protein UreF (210 aa).

The protein belongs to the UreF family. In terms of assembly, ureD, UreF and UreG form a complex that acts as a GTP-hydrolysis-dependent molecular chaperone, activating the urease apoprotein by helping to assemble the nickel containing metallocenter of UreC. The UreE protein probably delivers the nickel.

Its subcellular location is the cytoplasm. Required for maturation of urease via the functional incorporation of the urease nickel metallocenter. This is Urease accessory protein UreF from Cereibacter sphaeroides (strain ATCC 17023 / DSM 158 / JCM 6121 / CCUG 31486 / LMG 2827 / NBRC 12203 / NCIMB 8253 / ATH 2.4.1.) (Rhodobacter sphaeroides).